A 922-amino-acid polypeptide reads, in one-letter code: Isoleucine--tRNA ligase (922 aa).

Residues 57–67 (PYANGDIHLGH) carry the 'HIGH' region motif. E553 contributes to the L-isoleucyl-5'-AMP binding site. The short motif at 594-598 (KMSKS) is the 'KMSKS' region element. K597 is an ATP binding site. Residues C892, C895, C912, and C915 each contribute to the Zn(2+) site.

This sequence belongs to the class-I aminoacyl-tRNA synthetase family. IleS type 1 subfamily. As to quaternary structure, monomer. Requires Zn(2+) as cofactor.

The protein resides in the cytoplasm. The enzyme catalyses tRNA(Ile) + L-isoleucine + ATP = L-isoleucyl-tRNA(Ile) + AMP + diphosphate. In terms of biological role, catalyzes the attachment of isoleucine to tRNA(Ile). As IleRS can inadvertently accommodate and process structurally similar amino acids such as valine, to avoid such errors it has two additional distinct tRNA(Ile)-dependent editing activities. One activity is designated as 'pretransfer' editing and involves the hydrolysis of activated Val-AMP. The other activity is designated 'posttransfer' editing and involves deacylation of mischarged Val-tRNA(Ile). The chain is Isoleucine--tRNA ligase from Desulfitobacterium hafniense (strain DSM 10664 / DCB-2).